Reading from the N-terminus, the 111-residue chain is Universal stress protein B (111 aa).

A run of 2 helical transmembrane segments spans residues 1–21 (MFSTIALFWALCLVCIINMMR) and 90–110 (FILTSSLSGLVVICLISMLIW).

This sequence belongs to the universal stress protein B family.

The protein localises to the cell inner membrane. The chain is Universal stress protein B from Photorhabdus laumondii subsp. laumondii (strain DSM 15139 / CIP 105565 / TT01) (Photorhabdus luminescens subsp. laumondii).